The primary structure comprises 832 residues: MALPPSSPSPSSPSLQRLSTFKNPPPSSLSSGAPPPQTPSSSSSSPLDSFATDPILSPFLSSSFSSASFSSAALASGSPASTAERLHQAIRLLDSQLRNDVISRHPELLAQLSSLSHADVSLSSLRSSVSSLQSSIRRVRSDLSEPIKSIRSKSVQLSNLHTATELLSHSVRTLRLSKKLRDLADFPDPDKIDLTKAAQFHFEILTMCKEYDLFGIDVIDEEIKFVTEIGEKLRSEAMKVLERGMEGLNQAEVGTGLQVFYNLGELKSTVDQLVNKYKGMAVKSVSVAMDMKAITSGSGGGFGPGGIRSSGSPHIGGGAKVREALWQRMASCMEQLCSLVVAVWHLQRVLSKKRDPFTHVLLLDEVIKEGDSMLTDRVWDALVKAFTSQMKSAYTASSFVKEIFTMGYPKLVSMIENLLERISRDTDVKGVLPAINLERKEQMVACIAIFQTAFLSLCFGRLSDLVNSIFPMSSRGSLPSKEQISQVLSHIQDEIEAVHPDARLTLLVLREIGKALSNLAQRAECQISTGPETRQISGPATSTQIRNFTLCQHLQGIHTHISSMVADLPSIATDVLSPYLAAIYDAACEPVTPLFKAMRDKLESCILQIHDQNFGADDADMDNNASSYMEELQRSILHFRKEFLSRLLPSAANANTAGTESICTRLTRQMASRVLIFYIRHASLVRPLSEWGKLRMAKDMAELELAVGQNLFPVEQLGAPYRALRAFRPLVFLETSQMGSSPLINDLPPSIVLHHLYTRGPDELESPMQKNRLSPKQYSLWLDNQREDQIWKGIKATLDDYAVKIRSRGDKEFSPVYPLMLQIGSSLTQENL.

Composition is skewed to pro residues over residues 1 to 11 and 23 to 38; these read MALPPSSPSPS and NPPP…PPQT. Positions 1–49 are disordered; the sequence is MALPPSSPSPSSPSLQRLSTFKNPPPSSLSSGAPPPQTPSSSSSSPLDS. Positions 39–49 are enriched in low complexity; it reads PSSSSSSPLDS.

It belongs to the COG5 family. In terms of assembly, homodimer. Component of the conserved oligomeric Golgi complex which is composed of eight different subunits and is required for normal Golgi morphology and localization. Interacts with COG3, COG6, COG7 and COG8.

It is found in the golgi apparatus membrane. In terms of biological role, required for normal Golgi function. The protein is Conserved oligomeric Golgi complex subunit 5 of Arabidopsis thaliana (Mouse-ear cress).